We begin with the raw amino-acid sequence, 79 residues long: Hematopoietic cell signal transducer (79 aa).

A signal peptide spans 1–18; sequence MIHPGHILFLLLLPVAAA. At 19–34 the chain is on the extracellular side; the sequence is QTTPGSCSGCGSLSLP. The chain crosses the membrane as a helical span at residues 35 to 55; sequence LLAGLVAADAVASPLIVGAVF. The Cytoplasmic segment spans residues 56–79; the sequence is LCARPRRSPAQGDGKVYINMPGRG. Tyr-72 is modified (phosphotyrosine). The tract at residues 72 to 74 is GRB2 binding site; that stretch reads YIN. The PIK3R1 binding site stretch occupies residues 72 to 75; that stretch reads YINM.

Belongs to the DAP10 family. In terms of assembly, homodimer; Disulfide-linked. Heterohexamer composed of four subunits of HCST/DAP10 and two subunits of KLRK1. Interacts (via transmembrane domain) with KLRK1 (via transmembrane domain); the interaction is required for KLRK1 NK cell surface and induces NK cell-mediated cytotoxicity. Interacts with PIK3R1 and GRB2. Interacts with CLEC5A. Forms an CLEC5A/TYROBP/HCST trimolecular complex depending almost solely on TYROBP. Interacts with CD300H. In terms of processing, phosphorylated; PIK3R1 and GRB2 associate specifically with tyrosine-phosphorylated HCST. O-glycosylated.

The protein localises to the membrane. In terms of biological role, transmembrane adapter protein which associates with KLRK1 to form an activation receptor KLRK1-HCST in lymphoid and myeloid cells; this receptor plays a major role in triggering cytotoxicity against target cells expressing cell surface ligands such as MHC class I chain-related MICA and MICB, and UL16-binding proteins (ULBPs); these ligands are up-regulated by stress conditions and pathological state such as viral infection and tumor transformation. Functions as a docking site for PI3-kinase PIK3R1 and GRB2. Interaction of ULBPs with KLRK1-HCST triggers calcium mobilization and activation of the PIK3R1, MAP2K/ERK, and JAK2/STAT5 signaling pathways. Both PIK3R1 and GRB2 are required for full KLRK1-HCST-mediated activation and ultimate killing of target cells. In NK cells, KLRK1-HCST signaling directly induces cytotoxicity and enhances cytokine production initiated via DAP12/TYROBP-associated receptors. In T-cells, it provides primarily costimulation for TCR-induced signals. KLRK1-HCST receptor plays a role in immune surveillance against tumors and is required for cytolysis of tumors cells; indeed, melanoma cells that do not express KLRK1 ligands escape from immune surveillance mediated by NK cells. The chain is Hematopoietic cell signal transducer (HCST) from Macaca mulatta (Rhesus macaque).